Reading from the N-terminus, the 79-residue chain is ATP synthase subunit c (79 aa).

The next 2 helical transmembrane spans lie at 11–31 and 53–73; these read IAVA…IGIL and FFVV…LGLY.

It belongs to the ATPase C chain family. F-type ATPases have 2 components, F(1) - the catalytic core - and F(0) - the membrane proton channel. F(1) has five subunits: alpha(3), beta(3), gamma(1), delta(1), epsilon(1). F(0) has three main subunits: a(1), b(2) and c(10-14). The alpha and beta chains form an alternating ring which encloses part of the gamma chain. F(1) is attached to F(0) by a central stalk formed by the gamma and epsilon chains, while a peripheral stalk is formed by the delta and b chains.

The protein localises to the cell membrane. Functionally, f(1)F(0) ATP synthase produces ATP from ADP in the presence of a proton or sodium gradient. F-type ATPases consist of two structural domains, F(1) containing the extramembraneous catalytic core and F(0) containing the membrane proton channel, linked together by a central stalk and a peripheral stalk. During catalysis, ATP synthesis in the catalytic domain of F(1) is coupled via a rotary mechanism of the central stalk subunits to proton translocation. Key component of the F(0) channel; it plays a direct role in translocation across the membrane. A homomeric c-ring of between 10-14 subunits forms the central stalk rotor element with the F(1) delta and epsilon subunits. The sequence is that of ATP synthase subunit c from Buchnera aphidicola subsp. Acyrthosiphon pisum (strain 5A).